The primary structure comprises 433 residues: GTPase Obg (433 aa).

The region spanning 1–158 (MFVDQVKIYV…RNVILELKLL (158 aa)) is the Obg domain. The OBG-type G domain maps to 159–329 (ADVGLVGFPS…LLFAIADLLE (171 aa)). GTP contacts are provided by residues 165–172 (GFPSVGKS), 190–194 (FTTLV), 212–215 (DLPG), 282–285 (NKMD), and 310–312 (SAA). Mg(2+) is bound by residues S172 and T192. One can recognise an OCT domain in the interval 350-428 (KYEKEELPFT…LLDYEFEFVD (79 aa)).

Belongs to the TRAFAC class OBG-HflX-like GTPase superfamily. OBG GTPase family. As to quaternary structure, monomer. Mg(2+) is required as a cofactor.

The protein resides in the cytoplasm. In terms of biological role, an essential GTPase which binds GTP, GDP and possibly (p)ppGpp with moderate affinity, with high nucleotide exchange rates and a fairly low GTP hydrolysis rate. Plays a role in control of the cell cycle, stress response, ribosome biogenesis and in those bacteria that undergo differentiation, in morphogenesis control. This is GTPase Obg from Geobacillus thermodenitrificans (strain NG80-2).